The following is a 115-amino-acid chain: Beta-2-microglobulin (115 aa).

The signal sequence occupies residues 1–18 (MGLLICSLLLGLLCCSMA). Residues 23 to 114 (PKVEVYTREP…KSKDHFLMIG (92 aa)) enclose the Ig-like C1-type domain.

The protein belongs to the beta-2-microglobulin family. As to quaternary structure, heterodimer of an alpha chain and a beta chain. Beta-2-microglobulin is the beta-chain of major histocompatibility complex class I molecules.

It is found in the secreted. Component of the class I major histocompatibility complex (MHC). Involved in the presentation of peptide antigens to the immune system. The polypeptide is Beta-2-microglobulin (b2m) (Paralichthys olivaceus (Bastard halibut)).